Consider the following 182-residue polypeptide: Peptide methionine sulfoxide reductase MsrA (182 aa).

The active site involves cysteine 13.

This sequence belongs to the MsrA Met sulfoxide reductase family.

It catalyses the reaction L-methionyl-[protein] + [thioredoxin]-disulfide + H2O = L-methionyl-(S)-S-oxide-[protein] + [thioredoxin]-dithiol. It carries out the reaction [thioredoxin]-disulfide + L-methionine + H2O = L-methionine (S)-S-oxide + [thioredoxin]-dithiol. Has an important function as a repair enzyme for proteins that have been inactivated by oxidation. Catalyzes the reversible oxidation-reduction of methionine sulfoxide in proteins to methionine. The protein is Peptide methionine sulfoxide reductase MsrA of Mycobacterium bovis (strain ATCC BAA-935 / AF2122/97).